Reading from the N-terminus, the 197-residue chain is Probable chorismate pyruvate-lyase (197 aa).

The substrate site is built by arginine 77, leucine 115, and glutamate 176.

This sequence belongs to the UbiC family.

The protein localises to the cytoplasm. It catalyses the reaction chorismate = 4-hydroxybenzoate + pyruvate. Its pathway is cofactor biosynthesis; ubiquinone biosynthesis. In terms of biological role, removes the pyruvyl group from chorismate, with concomitant aromatization of the ring, to provide 4-hydroxybenzoate (4HB) for the ubiquinone pathway. This chain is Probable chorismate pyruvate-lyase, found in Burkholderia ambifaria (strain ATCC BAA-244 / DSM 16087 / CCUG 44356 / LMG 19182 / AMMD) (Burkholderia cepacia (strain AMMD)).